Here is a 909-residue protein sequence, read N- to C-terminus: Protein translocase subunit SecA (909 aa).

ATP contacts are provided by residues glutamine 87, 105–109 (GEGKT), and aspartate 507. 2 disordered regions span residues 567 to 586 (RRIDNQLRGRSGRQGDPGSS) and 859 to 909 (YSEA…GKLD). The segment covering 865–889 (EHQSVTEGHEAKQQPFVRKSDKIGR) has biased composition (basic and acidic residues). Residues cysteine 893, cysteine 895, cysteine 904, and histidine 905 each contribute to the Zn(2+) site. The span at 899 to 909 (RKYKQCHGKLD) shows a compositional bias: basic residues.

This sequence belongs to the SecA family. Monomer and homodimer. Part of the essential Sec protein translocation apparatus which comprises SecA, SecYEG and auxiliary proteins SecDF-YajC and YidC. The cofactor is Zn(2+).

It localises to the cell inner membrane. Its subcellular location is the cytoplasm. It carries out the reaction ATP + H2O + cellular proteinSide 1 = ADP + phosphate + cellular proteinSide 2.. Its function is as follows. Part of the Sec protein translocase complex. Interacts with the SecYEG preprotein conducting channel. Has a central role in coupling the hydrolysis of ATP to the transfer of proteins into and across the cell membrane, serving both as a receptor for the preprotein-SecB complex and as an ATP-driven molecular motor driving the stepwise translocation of polypeptide chains across the membrane. The polypeptide is Protein translocase subunit SecA (Nitrosomonas eutropha (strain DSM 101675 / C91 / Nm57)).